We begin with the raw amino-acid sequence, 217 residues long: KH domain-containing protein 3 (217 aa).

Residues 1-40 (MDAPRRFPTLVQLMQPKAMPVEVLGHLPKRFSWFHSEFLK) form an involved in RNA binding region. The KH; atypical domain occupies 40–103 (KNPKVVRLEV…SYQEDTIKMI (64 aa)). Positions 129–217 (QKAETQRSSI…EDARDPVTRL (89 aa)) are disordered. Residues 138 to 155 (IEVREAGTQRSVEVREAG) are compositionally biased toward basic and acidic residues. Residues T145 and T156 each carry the phosphothreonine; by ATM modification. Polar residues-rich tracts occupy residues 156 to 170 (TQRS…TQGS) and 177 to 194 (AGTQ…TQRS). S182 is subject to Phosphoserine. The segment covering 205-217 (RFREDARDPVTRL) has biased composition (basic and acidic residues).

This sequence belongs to the KHDC1 family. As to quaternary structure, component of the subcortical maternal complex (SCMC), at least composed of NLRP5, KHDC3L, OOEP, and TLE6 isoform 1. Within the complex, interacts with NLRP5, KHDC3L and TLE6 isoform 1. The SCMC may facilitate translocation of its components between the nuclear and cytoplasmic compartments. Forms a scaffold complex with OOEP/FLOPED, and interacts with BLM and TRIM25 at DNA replication forks. Interacts with PARP1; the interaction is increased following the formation of DNA double-strand breaks. Interacts with NUMA1. As to expression, expression appears to be maximal in germinal vesicle oocytes, it tails off through metaphase II oocytes and is undetectable following the completion of the oocyte to embryo transition.

The protein resides in the cytoplasm. It is found in the cell cortex. Its subcellular location is the nucleus. The protein localises to the mitochondrion. It localises to the cytoskeleton. The protein resides in the microtubule organizing center. It is found in the centrosome. Its subcellular location is the chromosome. In terms of biological role, component of the subcortical maternal complex (SCMC), a multiprotein complex that plays a key role in early embryonic development. The SCMC complex is a structural constituent of cytoplasmic lattices, which consist in fibrous structures found in the cytoplasm of oocytes and preimplantation embryos. They are required to store maternal proteins critical for embryonic development, such as proteins that control epigenetic reprogramming of the preimplantation embryo, and prevent their degradation or activation. KHDC3 ensures proper spindle assembly by regulating the localization of AURKA via RHOA signaling and of PLK1 via a RHOA-independent process. Required for the localization of MAD2L1 to kinetochores to enable spindle assembly checkpoint function. As part of the OOEP-KHDC3 scaffold, recruits BLM and TRIM25 to DNA replication forks, thereby promoting the ubiquitination of BLM by TRIM25, enhancing BLM retainment at replication forks and therefore promoting stalled replication fork restart. Regulates homologous recombination-mediated DNA repair via recruitment of RAD51 to sites of DNA double-strand breaks, and sustainment of PARP1 activity, which in turn modulates downstream ATM or ATR activation. Activation of ATM or ATR in response to DNA double-strand breaks may be cell-type specific. Its role in DNA double-strand break repair is independent of its role in restarting stalled replication forks. Promotes neural stem cell neurogenesis and neuronal differentiation in the hippocampus. May regulate normal development of learning, memory and anxiety. Capable of binding RNA. This chain is KH domain-containing protein 3, found in Homo sapiens (Human).